We begin with the raw amino-acid sequence, 977 residues long: MASAQAETNVGLASEQGPVAQRQRKGTGSGADSPKSNRSSPTQQEEKRIKSEDRTSPTGGAKDEDKESQGHAVAGGGGSSPVSSPQGRSSSVASPSSSSQQFCLRWNNYQTNLTTIFDQLLQNECFVDVTLACDGRSMKAHKMVLSACSPYFQTLLAETPCQHPIVIMRDVNWSDLKAIVEFMYRGEINVSQDQIGPLLRIAEMLKVRGLADVTHMEAATAAAAAASSERMPSSPKESTSTSRTEHDREREAEELLAFMQPEKKLRTSDWDPAELRLSPLERQQGRNVRKRRWPSADTIFNPPAPPSPLSSLIAAERMELEQKERERQRDCSLMTPPPKPPMSSGSTVGATRRLETAIHALDMPSPAATPGPLSRSSRPHSQSPQQQQAQQQGQLPLPLPLHPHHHASPAPHPSQTAGSAHHPASPAGDSRFPLGPAAAMAAARELSGLGPGPSAEPRLPPPPPHHHGGGGVGGGGVGGGGAGGVGSGGGSSLADDLEIKPGIAEMIREEERAKMMENSHAWMGATGSTLAADSYQYQLQSMWQKCWNTNQNLMHHMRFRERGPLKSWRPETMAEAIFSVLKEGLSLSQAARKYDIPYPTFVLYANRVHNMLGPSIDGGPDLRPKGRGRPQRILLGIWPDEHIKGVIKTVVFRDTKDIKDESLAAHMPPYGRHSPAFPLQDLPLSYPGASGALAGAPSSMACPNGSGPQTGVGVAGEQHMSQETAAAVAAVAHNIRQQMQMAAVPPGLFNLPPHPGVGGGVGNVPGAAGGRASISPALSSGSGPRHAPSPCGPAGLLPNLPPSMAVALHHQQQQQAAHHHMQQLHLQQQQAHLHHHQQQQQQQQQQHHQGGHQVAHKSGFGASSSSSASSSSMGQHHAPKAKSSPLRSETPRLHSPLGDLGLDMASYKREFSPSRLFAEDLAELVGASVSSSSSSAAAATAPPERSAGAASAATGADAPSSSSSGGIKVEPITTTSE.

Positions 1 to 97 (MASAQAETNV…RSSSVASPSS (97 aa)) are disordered. The segment covering 34 to 43 (PKSNRSSPTQ) has biased composition (polar residues). Positions 44 to 69 (QEEKRIKSEDRTSPTGGAKDEDKESQ) are enriched in basic and acidic residues. Residues 80-97 (SPVSSPQGRSSSVASPSS) show a composition bias toward low complexity. The BTB domain maps to 127 to 192 (VDVTLACDGR…MYRGEINVSQ (66 aa)). Disordered regions lie at residues 221–249 (AAAAAASSERMPSSPKESTSTSRTEHDRE), 281–348 (ERQQ…GSTV), 362–434 (DMPS…RFPL), and 447–497 (SGLG…ADDL). The segment covering 316–330 (ERMELEQKERERQRD) has biased composition (basic and acidic residues). The segment covering 372 to 396 (PLSRSSRPHSQSPQQQQAQQQGQLP) has biased composition (low complexity). Gly residues predominate over residues 469-491 (GGGVGGGGVGGGGAGGVGSGGGS). One can recognise an HTH psq-type domain in the interval 559 to 611 (FRERGPLKSWRPETMAEAIFSVLKEGLSLSQAARKYDIPYPTFVLYANRVHNM). The segment at residues 569 to 614 (RPETMAEAIFSVLKEGLSLSQAARKYDIPYPTFVLYANRVHNMLGP) is a DNA-binding region (H-T-H motif). Positions 621-632 (DLRPKGRGRPQR) form a DNA-binding region, a.T hook. 2 disordered regions span residues 772 to 900 (ASIS…LGDL) and 925 to 977 (VGAS…TTSE). 4 stretches are compositionally biased toward low complexity: residues 804 to 816 (MAVALHHQQQQQA), 838 to 853 (QQQQQQQQQHHQGGHQ), 862 to 872 (ASSSSSASSSS), and 925 to 966 (VGAS…SSGG).

As to expression, leg imaginal disk at the central region of the tarsus and in eye antenna disk at the basal cylinder.

The protein resides in the nucleus. Probably acts as a transcriptional regulator. Required for the specification of the tarsal segment. Also involved in antenna development. This Drosophila melanogaster (Fruit fly) protein is Protein bric-a-brac 1 (bab1).